Here is a 329-residue protein sequence, read N- to C-terminus: Putative methylthioribose-1-phosphate isomerase (329 aa).

Substrate is bound by residues 50 to 52 (RGA), Arg84, and Gln182. Asp223 acts as the Proton donor in catalysis. 233-234 (NK) is a binding site for substrate.

The protein belongs to the eIF-2B alpha/beta/delta subunits family. MtnA subfamily.

It carries out the reaction 5-(methylsulfanyl)-alpha-D-ribose 1-phosphate = 5-(methylsulfanyl)-D-ribulose 1-phosphate. Catalyzes the interconversion of methylthioribose-1-phosphate (MTR-1-P) into methylthioribulose-1-phosphate (MTRu-1-P). The chain is Putative methylthioribose-1-phosphate isomerase from Methanocaldococcus jannaschii (strain ATCC 43067 / DSM 2661 / JAL-1 / JCM 10045 / NBRC 100440) (Methanococcus jannaschii).